The following is an 88-amino-acid chain: Small ribosomal subunit protein bS20 (88 aa).

This sequence belongs to the bacterial ribosomal protein bS20 family.

Its function is as follows. Binds directly to 16S ribosomal RNA. The protein is Small ribosomal subunit protein bS20 of Nitrobacter winogradskyi (strain ATCC 25391 / DSM 10237 / CIP 104748 / NCIMB 11846 / Nb-255).